We begin with the raw amino-acid sequence, 362 residues long: 3-isopropylmalate dehydrogenase (362 aa).

Substrate-binding residues include arginine 97, arginine 107, arginine 135, and aspartate 225. Mg(2+)-binding residues include aspartate 225, aspartate 249, and aspartate 253. Position 283 to 295 (283 to 295 (GSAPDIAHKNLAN)) interacts with NAD(+).

Belongs to the isocitrate and isopropylmalate dehydrogenases family. LeuB type 1 subfamily. Homodimer. Requires Mg(2+) as cofactor. Mn(2+) is required as a cofactor.

The protein resides in the cytoplasm. The catalysed reaction is (2R,3S)-3-isopropylmalate + NAD(+) = 4-methyl-2-oxopentanoate + CO2 + NADH. The protein operates within amino-acid biosynthesis; L-leucine biosynthesis; L-leucine from 3-methyl-2-oxobutanoate: step 3/4. Catalyzes the oxidation of 3-carboxy-2-hydroxy-4-methylpentanoate (3-isopropylmalate) to 3-carboxy-4-methyl-2-oxopentanoate. The product decarboxylates to 4-methyl-2 oxopentanoate. The chain is 3-isopropylmalate dehydrogenase from Prochlorococcus marinus (strain SARG / CCMP1375 / SS120).